Reading from the N-terminus, the 248-residue chain is Acetylglutamate kinase (248 aa).

Substrate contacts are provided by residues 36-37, R58, and N147; that span reads GG.

Belongs to the acetylglutamate kinase family. ArgB subfamily.

It localises to the cytoplasm. The enzyme catalyses N-acetyl-L-glutamate + ATP = N-acetyl-L-glutamyl 5-phosphate + ADP. The protein operates within amino-acid biosynthesis; L-arginine biosynthesis; N(2)-acetyl-L-ornithine from L-glutamate: step 2/4. Its function is as follows. Catalyzes the ATP-dependent phosphorylation of N-acetyl-L-glutamate. This is Acetylglutamate kinase from Thermus thermophilus (strain ATCC BAA-163 / DSM 7039 / HB27).